We begin with the raw amino-acid sequence, 78 residues long: Large ribosomal subunit protein bL28 (78 aa).

It belongs to the bacterial ribosomal protein bL28 family.

This is Large ribosomal subunit protein bL28 from Synechococcus sp. (strain ATCC 27144 / PCC 6301 / SAUG 1402/1) (Anacystis nidulans).